The chain runs to 215 residues: Uridine kinase (215 aa).

16-23 (GASASGKS) is a binding site for ATP.

Belongs to the uridine kinase family.

The protein localises to the cytoplasm. It catalyses the reaction uridine + ATP = UMP + ADP + H(+). The enzyme catalyses cytidine + ATP = CMP + ADP + H(+). The protein operates within pyrimidine metabolism; CTP biosynthesis via salvage pathway; CTP from cytidine: step 1/3. Its pathway is pyrimidine metabolism; UMP biosynthesis via salvage pathway; UMP from uridine: step 1/1. The polypeptide is Uridine kinase (Aliivibrio salmonicida (strain LFI1238) (Vibrio salmonicida (strain LFI1238))).